A 165-amino-acid polypeptide reads, in one-letter code: MSPKKAKKRAEGANSNVFSMFEQTQIQEFKEAFTIMDQNRDGFIDKNDLRDTFAALGRVNVKNEEIDEMIKEAPGPINFTVFLTMFGEKLKGADPEETILNAFKVFDPEGKGVLKADYVREMLTTQAERFSKDEIDQMFAAFPPDVTGNLDYKNLVHIITHGEEK.

Serine 2 bears the N,N,N-trimethylserine mark. The residue at position 14 (asparagine 14) is a Deamidated asparagine. 2 positions are modified to phosphoserine: serine 15 and serine 19. EF-hand domains are found at residues 24 to 59, 94 to 129, and 130 to 165; these read TQIQ…LGRV, DPEE…QAER, and FSKD…GEEK. 4 residues coordinate Ca(2+): aspartate 37, asparagine 39, aspartate 41, and aspartate 48. Phosphothreonine is present on threonine 52.

Myosin is a hexamer of 2 heavy chains and 4 light chains. Interacts with MYOC. In terms of processing, N-terminus is methylated by METTL11A/NTM1. Phosphorylated by MYLK3 and MYLK2; promotes cardiac muscle contraction and function. Dephosphorylated by PPP1CB complexed to PPP1R12B. The phosphorylated form in adult is expressed as gradients across the heart from endocardium (low phosphorylation) to epicardium (high phosphorylation); regulates cardiac torsion and workload distribution.

The protein localises to the cytoplasm. Its subcellular location is the myofibril. It is found in the sarcomere. The protein resides in the a band. In terms of biological role, contractile protein that plays a role in heart development and function. Following phosphorylation, plays a role in cross-bridge cycling kinetics and cardiac muscle contraction by increasing myosin lever arm stiffness and promoting myosin head diffusion; as a consequence of the increase in maximum contraction force and calcium sensitivity of contraction force. These events altogether slow down myosin kinetics and prolong duty cycle resulting in accumulated myosins being cooperatively recruited to actin binding sites to sustain thin filament activation as a means to fine-tune myofilament calcium sensitivity to force. During cardiogenesis plays an early role in cardiac contractility by promoting cardiac myofibril assembly. The chain is Myosin regulatory light chain 2, ventricular/cardiac muscle isoform from Oryctolagus cuniculus (Rabbit).